Here is a 1148-residue protein sequence, read N- to C-terminus: Minor outer capsid protein P2 (1148 aa).

The PPPDE domain maps to 930–1148; that stretch reads QDGTANIFQK…QYIQSIYDEL (219 aa). Catalysis depends on residues His-954 and Cys-1111.

Belongs to the phytoreovirus minor outer capsid protein P2 family.

It is found in the virion. It localises to the host cytoplasm. In terms of biological role, minor capsid protein present in the outer capsid, which is required for adsorption of the virus onto host insect cells. The chain is Minor outer capsid protein P2 from Nephotettix cincticeps (Green rice leafhopper).